Reading from the N-terminus, the 179-residue chain is Large ribosomal subunit protein uL6 (179 aa).

This sequence belongs to the universal ribosomal protein uL6 family. Part of the 50S ribosomal subunit.

In terms of biological role, this protein binds to the 23S rRNA, and is important in its secondary structure. It is located near the subunit interface in the base of the L7/L12 stalk, and near the tRNA binding site of the peptidyltransferase center. The chain is Large ribosomal subunit protein uL6 from Rhodococcus opacus (strain B4).